Reading from the N-terminus, the 791-residue chain is Subtilisin-like protease SBT5.6 (791 aa).

The first 20 residues, 1 to 20 (MKKLTSLFPLLFLIPLLASC), serve as a signal peptide directing secretion. A propeptide spans 21–108 (AEEKQVYIVY…KSHPRKYEAH (88 aa)) (activation peptide). Positions 26–104 (VYIVYFGEHK…VSVFKSHPRK (79 aa)) constitute an Inhibitor I9 domain. Positions 134 to 645 (ADDRFRVGRN…SGHFRPTKAA (512 aa)) constitute a Peptidase S8 domain. The Charge relay system role is filled by aspartate 160. Residues asparagine 193 and asparagine 219 are each glycosylated (N-linked (GlcNAc...) asparagine). The Charge relay system role is filled by histidine 235. The PA domain occupies 400-494 (FAPLVYASNV…VTPTVVDKIL (95 aa)). N-linked (GlcNAc...) asparagine glycosylation is present at asparagine 417. Serine 578 serves as the catalytic Charge relay system. N-linked (GlcNAc...) asparagine glycosylation is found at asparagine 666, asparagine 713, and asparagine 761.

This sequence belongs to the peptidase S8 family.

It is found in the secreted. The sequence is that of Subtilisin-like protease SBT5.6 from Arabidopsis thaliana (Mouse-ear cress).